Reading from the N-terminus, the 849-residue chain is Membrane protein-large ribosomal subunit bL9 fusion protein (849 aa).

A unknown region spans residues 1 to 680; it reads MFSKNKHNTK…TQLEGTNIKT (680 aa). 2 helical membrane passes run 11–31 and 64–84; these read FIVI…LDFQ and IIFF…VISF. A GGDEF domain is found at 214 to 342; that stretch reads KTLALAMITF…GGDQVVVNIE (129 aa). A large ribosomal subunit protein bL9 region spans residues 681–849; sequence VTDTLKHFLK…FLNVTERKSK (169 aa).

The protein belongs to the bacterial ribosomal protein bL9 family.

It is found in the cell membrane. In terms of biological role, binds to the 23S rRNA. This chain is Membrane protein-large ribosomal subunit bL9 fusion protein, found in Onion yellows phytoplasma (strain OY-M).